The following is a 709-amino-acid chain: Tyrosine-protein phosphatase cdc-14 (709 aa).

The Tyrosine-protein phosphatase domain maps to 196–354; that stretch reads DFNWIIPGKI…QKFCWSLSQS (159 aa). Residue C295 is the Phosphocysteine intermediate of the active site. The Nuclear localization signal motif lies at 366-371; that stretch reads KRNVRR. Positions 372–381 match the Nuclear export signal motif; that stretch reads LVNQVDDINL. Disordered stretches follow at residues 403–541, 573–594, and 628–661; these read VQVQ…LTRT, RYLS…GTSP, and ESKP…PYPS. Positions 404–413 are enriched in polar residues; sequence QVQNGRSTAP. Low complexity predominate over residues 463–479; sequence TTSPNSSSSRRFVKSST. Composition is skewed to polar residues over residues 480–490 and 501–521; these read PQMTVPSQAYL and PSKN…TPNG. The span at 526 to 541 shows a compositional bias: low complexity; sequence RTRNSSGNTTSTLTRT. The span at 639 to 649 shows a compositional bias: polar residues; the sequence is PGTSKSTSSLK.

This sequence belongs to the protein-tyrosine phosphatase family. Non-receptor class CDC14 subfamily.

It localises to the cytoplasm. The protein resides in the cytoskeleton. It is found in the microtubule organizing center. Its subcellular location is the centrosome. The protein localises to the spindle. It localises to the midbody. The protein resides in the nucleus. The catalysed reaction is O-phospho-L-tyrosyl-[protein] + H2O = L-tyrosyl-[protein] + phosphate. Inhibited by sodium orthovanadate. Weakly inhibited by sodium fluoride and okadaic acid. In terms of biological role, protein phosphatase that negatively regulates the G1-to-S phase transition to inhibit the cell cycle and establish quiescence in cells of multiple lineages including vulval, hypodermal and intestinal. Promotes nuclear accumulation and activity of the cyclin-dependent kinase inhibitor cki-1 which leads to inhibition of G1 progression during vulval tissue development. Has been shown to not be required for cytokinesis. However, in the embryo, in a contrasting study, has been shown to act as a regulator of central spindle formation and cytokinesis, and may be required for localization of the spindle component zen-4, and its interacting partner air-2 at the spindle during late cell divisions. Its function is as follows. Main regulator of cell cycle arrest in vulval precursor cells. This is Tyrosine-protein phosphatase cdc-14 from Caenorhabditis elegans.